The primary structure comprises 103 residues: Protamine-2 (103 aa).

Residues 1–103 (MVRYRMRSLS…RTRRRRCRRH (103 aa)) are disordered. A phosphoserine mark is found at S8 and S10. A compositionally biased stretch (basic and acidic residues) spans 8–17 (SLSERPHEVH). Low complexity predominate over residues 18 to 29 (GQQVHGQDQGHN). Residues 48–103 (HRGHSHHRRRRCSRRRLHRIHRRRHRSCRRRRRRSCRHRRRHRRGCRTRRRRCRRH) are compositionally biased toward basic residues.

The protein belongs to the protamine P2 family. As to quaternary structure, interacts with TDRP. Proteolytic processing into mature chains is required for histone eviction during spermatogenesis. Transition proteins (TNP1 and TNP2) are required for processing. Testis.

It is found in the nucleus. The protein resides in the chromosome. Functionally, protamines substitute for histones in the chromatin of sperm during the haploid phase of spermatogenesis. They compact sperm DNA into a highly condensed, stable and inactive complex. The sequence is that of Protamine-2 (PRM2) from Macaca nemestrina (Pig-tailed macaque).